The sequence spans 537 residues: Probable alpha-galactosidase A (537 aa).

The N-terminal stretch at 1–23 is a signal peptide; it reads MNQGTKSILLAATLAAIPWQVYG. Cysteine 46 and cysteine 78 form a disulfide bridge. N-linked (GlcNAc...) asparagine glycans are attached at residues asparagine 49, asparagine 87, asparagine 93, and asparagine 123. A disulfide bond links cysteine 126 and cysteine 156. Residue aspartate 154 is the Nucleophile of the active site. Asparagine 203 carries an N-linked (GlcNAc...) asparagine glycan. Aspartate 212 functions as the Proton donor in the catalytic mechanism. Asparagine 355 and asparagine 436 each carry an N-linked (GlcNAc...) asparagine glycan. Residues 413 to 537 form the Ricin B-type lectin domain; that stretch reads CSSVVPTGLV…FGLPSGVQLS (125 aa). Disulfide bonds link cysteine 430-cysteine 444 and cysteine 469-cysteine 482. N-linked (GlcNAc...) asparagine glycosylation occurs at asparagine 491.

Belongs to the glycosyl hydrolase 27 family.

Its subcellular location is the secreted. It catalyses the reaction Hydrolysis of terminal, non-reducing alpha-D-galactose residues in alpha-D-galactosides, including galactose oligosaccharides, galactomannans and galactolipids.. Functionally, hydrolyzes a variety of simple alpha-D-galactoside as well as more complex molecules such as oligosaccharides and polysaccharides. The chain is Probable alpha-galactosidase A (aglA) from Aspergillus niger (strain ATCC MYA-4892 / CBS 513.88 / FGSC A1513).